Here is a 367-residue protein sequence, read N- to C-terminus: Ganglioside-induced differentiation-associated protein 1-like 1 (367 aa).

One can recognise a GST N-terminal domain in the interval 45–126 (ESLVLYHWTQ…YVERTFTGEH (82 aa)). Residues 174–341 (PKYATAEIRR…RLVKRKPPSF (168 aa)) form the GST C-terminal domain.

Belongs to the GST superfamily.

The sequence is that of Ganglioside-induced differentiation-associated protein 1-like 1 (GDAP1L1) from Homo sapiens (Human).